We begin with the raw amino-acid sequence, 500 residues long: NAD(P)H-quinone oxidoreductase chain 4, chloroplastic (500 aa).

Helical transmembrane passes span 4-24 (FPWL…IFLF), 31-51 (VIKW…TYAF), 84-104 (GFSL…TLAA), 111-129 (SRLF…IGLF), 134-154 (LLLF…LLSM), 167-187 (FILY…GIAL), 208-228 (ALEI…SPII), 242-262 (HYST…YGLV), 272-292 (AHSI…IYAA), 305-325 (IAYS…SISD), 330-350 (GAIL…FLAG), 386-406 (LALP…GIIT), 416-436 (ILIT…LLSM), and 463-483 (FVSI…DFVF).

The protein belongs to the complex I subunit 4 family.

The protein resides in the plastid. It is found in the chloroplast thylakoid membrane. The catalysed reaction is a plastoquinone + NADH + (n+1) H(+)(in) = a plastoquinol + NAD(+) + n H(+)(out). The enzyme catalyses a plastoquinone + NADPH + (n+1) H(+)(in) = a plastoquinol + NADP(+) + n H(+)(out). The polypeptide is NAD(P)H-quinone oxidoreductase chain 4, chloroplastic (Manihot esculenta (Cassava)).